A 183-amino-acid polypeptide reads, in one-letter code: Histone deacetylase complex subunit SAP30L (183 aa).

M1 is modified (N-acetylmethionine). Acidic residues predominate over residues 1–10; sequence MNGFSTEEDS. The segment at 1 to 23 is disordered; that stretch reads MNGFSTEEDSREGPPAAPAAAAP. Disulfide bonds link C29-C30 and C38-C74. The Atypical zinc finger occupies 29–77; sequence CCLIEDGERCVRPAGNASFSKRVQKSISQKKLKLDIDKSVRHLYICDFH. K49 is covalently cross-linked (Glycyl lysine isopeptide (Lys-Gly) (interchain with G-Cter in SUMO2)). A disordered region spans residues 85–105; sequence RNKRKRKTSDDGGDSPEHDTD. Positions 86–91 match the Nuclear localization signal (NLS) motif; that stretch reads NKRKRK. The important for DNA and phosphoinositide binding stretch occupies residues 88 to 90; it reads RKR. Position 92 is a phosphothreonine (T92). Phosphoserine occurs at positions 93 and 99. A Phosphothreonine modification is found at T104. Residues K155, K166, and K175 each participate in a glycyl lysine isopeptide (Lys-Gly) (interchain with G-Cter in SUMO2) cross-link.

The protein belongs to the SAP30 family. In terms of assembly, interacts with components of the histone deacetylase complex SIN3A, HDAC1 and HDAC2. Binds histones and nucleosomes. Interacts with FEZ1. Detected in brain and ovary, and at lower levels in heart, small intestine, lung, kidney, skeletal muscle, stomach and spleen (at protein level). Ubiquitous; expressed in all tissues tested with highest levels in testis.

The protein resides in the nucleus. It localises to the nucleolus. Its function is as follows. Functions as a transcription repressor, probably via its interaction with histone deacetylase complexes. Involved in the functional recruitment of the class 1 Sin3-histone deacetylase complex (HDAC) to the nucleolus. Binds DNA, apparently without sequence-specificity, and bends bound double-stranded DNA. Binds phosphoinositol phosphates (phosphoinositol 3-phosphate, phosphoinositol 4-phosphate and phosphoinositol 5-phosphate) via the same basic sequence motif that mediates DNA binding and nuclear import. Functions as a transcription repressor; isoform 2 has lower transcription repressor activity than isoform 1 and isoform 3. In terms of biological role, functions as a transcription repressor; its activity is marginally lower than that of isoform 1. The chain is Histone deacetylase complex subunit SAP30L (SAP30L) from Homo sapiens (Human).